A 342-amino-acid polypeptide reads, in one-letter code: Tetraacyldisaccharide 4'-kinase (342 aa).

68-75 (TVGGTGKT) is an ATP binding site.

It belongs to the LpxK family.

The enzyme catalyses a lipid A disaccharide + ATP = a lipid IVA + ADP + H(+). The protein operates within glycolipid biosynthesis; lipid IV(A) biosynthesis; lipid IV(A) from (3R)-3-hydroxytetradecanoyl-[acyl-carrier-protein] and UDP-N-acetyl-alpha-D-glucosamine: step 6/6. Its function is as follows. Transfers the gamma-phosphate of ATP to the 4'-position of a tetraacyldisaccharide 1-phosphate intermediate (termed DS-1-P) to form tetraacyldisaccharide 1,4'-bis-phosphate (lipid IVA). This chain is Tetraacyldisaccharide 4'-kinase, found in Burkholderia ambifaria (strain MC40-6).